The following is a 96-amino-acid chain: ATP-dependent Clp protease adapter protein ClpS (96 aa).

This sequence belongs to the ClpS family. As to quaternary structure, binds to the N-terminal domain of the chaperone ClpA.

Functionally, involved in the modulation of the specificity of the ClpAP-mediated ATP-dependent protein degradation. The sequence is that of ATP-dependent Clp protease adapter protein ClpS from Campylobacter jejuni subsp. doylei (strain ATCC BAA-1458 / RM4099 / 269.97).